We begin with the raw amino-acid sequence, 556 residues long: Cholesterol oxidase (556 aa).

5 residues coordinate FAD: Gly18, Glu37, Gly88, Ala93, and Val235. The active-site Proton acceptor is His471. Gly504 is an FAD binding site.

The protein belongs to the GMC oxidoreductase family. Requires FAD as cofactor.

It carries out the reaction cholesterol + O2 = cholest-5-en-3-one + H2O2. The enzyme catalyses cholest-5-en-3-one = cholest-4-en-3-one. It functions in the pathway steroid metabolism; cholesterol degradation. Functionally, bifunctional enzyme that catalyzes the oxidation and isomerization of cholesterol to cholestenone (cholest-4-en-3-one), an initial step in the cholesterol degradation process. The chain is Cholesterol oxidase from Acinetobacter baumannii.